The chain runs to 202 residues: Guanylyl cyclase-activating protein 1 (202 aa).

G2 carries the N-myristoyl glycine lipid modification. Deamidated asparagine is present on N3. EF-hand domains are found at residues 31–49 (SGQLTLYEFRQFFGLKNLS), 51–86 (SASQYVEQMFETFDFNKDGYIDFMEYVAALSLVLKG), 87–122 (KVEQKLRWYFKLYDVDGNGCIDRDELLTIIRAIRTI), and 131–166 (SAEEFTDTVFAKIDINGDGELSLEEFMEGVQKDQML). D64, N66, D68, Y70, E75, D100, D102, N104, C106, E111, D144, N146, D148, E150, and E155 together coordinate Ca(2+).

As to quaternary structure, homodimer. As to expression, in the retina, expressed in rod photoreceptors (at protein level). Expressed in cone photoreceptors.

It is found in the membrane. Its subcellular location is the photoreceptor inner segment. It localises to the cell projection. The protein resides in the cilium. The protein localises to the photoreceptor outer segment. In terms of biological role, stimulates retinal guanylyl cyclase when free calcium ions concentration is low and inhibits guanylyl cyclase when free calcium ions concentration is elevated. This Ca(2+)-sensitive regulation of retinal guanylyl cyclase is a key event in recovery of the dark state of rod photoreceptors following light exposure. May be involved in cone photoreceptor light response and recovery of response in bright light. This chain is Guanylyl cyclase-activating protein 1 (Guca1a), found in Mus musculus (Mouse).